The chain runs to 554 residues: Chaperonin GroEL (554 aa).

Residues 30 to 33, Lys51, 87 to 91, Gly415, 478 to 480, and Asp494 contribute to the ATP site; these read TLGP, DGTTT, and DAA.

This sequence belongs to the chaperonin (HSP60) family. As to quaternary structure, forms a cylinder of 14 subunits composed of two heptameric rings stacked back-to-back. Interacts with the co-chaperonin GroES.

The protein resides in the cytoplasm. The enzyme catalyses ATP + H2O + a folded polypeptide = ADP + phosphate + an unfolded polypeptide.. Together with its co-chaperonin GroES, plays an essential role in assisting protein folding. The GroEL-GroES system forms a nano-cage that allows encapsulation of the non-native substrate proteins and provides a physical environment optimized to promote and accelerate protein folding. The protein is Chaperonin GroEL of Pelobacter propionicus (strain DSM 2379 / NBRC 103807 / OttBd1).